Here is a 197-residue protein sequence, read N- to C-terminus: Large ribosomal subunit protein bL25 (197 aa).

It belongs to the bacterial ribosomal protein bL25 family. CTC subfamily. In terms of assembly, part of the 50S ribosomal subunit; part of the 5S rRNA/L5/L18/L25 subcomplex. Contacts the 5S rRNA. Binds to the 5S rRNA independently of L5 and L18.

This is one of the proteins that binds to the 5S RNA in the ribosome where it forms part of the central protuberance. This chain is Large ribosomal subunit protein bL25, found in Pseudomonas putida (strain ATCC 700007 / DSM 6899 / JCM 31910 / BCRC 17059 / LMG 24140 / F1).